Reading from the N-terminus, the 523-residue chain is Transcription initiation factor TFIID subunit 4 (523 aa).

2 disordered regions span residues Met-1–Asp-100 and Ala-185–Gly-241. Residues Gln-58–Ser-77 show a composition bias toward low complexity. Residues Pro-78 to Thr-87 are compositionally biased toward pro residues. One can recognise a TAFH domain in the interval Asp-101 to Asn-199. A compositionally biased stretch (pro residues) spans Pro-204–Gln-213. Residues Gln-214–Gln-236 show a composition bias toward low complexity. Residues Leu-329 to Arg-383 are histone-fold. Positions Glu-333 to Leu-382 are necessary and sufficient for interaction with oma-1. Positions Gln-407 to Glu-435 are disordered.

Belongs to the TAF4 family. In terms of assembly, component of the TFIID basal transcription factor complex, composed of TATA-box-binding protein tbp-1, and a number of TBP-associated factors (TAFs). Interacts (via histone-fold domain) with oma-1 (via histone-fold domain). May also interact with oma-2. Interacts (via histone-fold domain) with taf-12 (via the histone-fold domain).

It localises to the nucleus. The protein resides in the cytoplasm. In terms of biological role, the TFIID basal transcription factor complex plays a major role in the initiation of RNA polymerase II (Pol II)-dependent transcription. TFIID recognizes and binds promoters via its subunit tbp-1, a TATA-box-binding protein, and promotes assembly of the pre-initiation complex (PIC). The TFIID complex consists of tbp-1 and TBP-associated factors (TAFs), including taf-4. Essential for early embryonic development, probably acting via activating transcription initiation by RNA polymerase II, as part of the TFIID complex. In early embryos, but not oocytes, remains, presumably inactive, in the cytoplasm as a result of binding to oma-1. Upon degradation of oma-1, taf-4 is released and bound by taf-12, and the taf-4/12 heterodimer translocates to the nucleus and transcriptional repression is relieved. Involved in lifespan extension in a manner dependent upon mitochondrial function. Plays a role in modulating polyribosome formation. The protein is Transcription initiation factor TFIID subunit 4 of Caenorhabditis elegans.